A 515-amino-acid polypeptide reads, in one-letter code: MTKRVLISVSDKAGIVEFAQELKKLGWEIISTGGTKVALDNAGVDTIAIDDVTGFPEMMDGRVKTLHPNIHGGLLARRDLDSHLEAAKDNKIELIDLVVVNLYPFKETILKPDVTYADAVENIDIGGPSMLRSAAKNHASVTVVVDPADYAVVLDELAANGETSYETRQRLAAKVFRHTAAYDALIAEYFTAQVGESKPEKLTLTYDLKQPMRYGENPQQDADFYQKALPTDYSIASAKQLNGKELSFNNIRDADAAIRIIRDFKDSPTVVALKHMNPCGIGQADDIETAWDYAYESDPVSIFGGIVVLNREVDAATAEKMHGVFLEIIIAPSYTDEALAILINKKKNLRILALPFNAQEASEVEAEYTGVVGGLLVQNQDVVKESPADWQVVTKRQPTETEATALEFAWKAIKYVKSNGIIVTNDHMTLGVGPGQTNRVASVRLAIDQAKDRLNGAVLASDAFFPFADNVEEIAKAGIKAIIQPGGSVRDQEFIEAADKYGLTMVFTGVRHFRH.

The MGS-like domain occupies 1–145 (MTKRVLISVS…KNHASVTVVV (145 aa)).

This sequence belongs to the PurH family.

It carries out the reaction (6R)-10-formyltetrahydrofolate + 5-amino-1-(5-phospho-beta-D-ribosyl)imidazole-4-carboxamide = 5-formamido-1-(5-phospho-D-ribosyl)imidazole-4-carboxamide + (6S)-5,6,7,8-tetrahydrofolate. It catalyses the reaction IMP + H2O = 5-formamido-1-(5-phospho-D-ribosyl)imidazole-4-carboxamide. The protein operates within purine metabolism; IMP biosynthesis via de novo pathway; 5-formamido-1-(5-phospho-D-ribosyl)imidazole-4-carboxamide from 5-amino-1-(5-phospho-D-ribosyl)imidazole-4-carboxamide (10-formyl THF route): step 1/1. It functions in the pathway purine metabolism; IMP biosynthesis via de novo pathway; IMP from 5-formamido-1-(5-phospho-D-ribosyl)imidazole-4-carboxamide: step 1/1. This chain is Bifunctional purine biosynthesis protein PurH, found in Streptococcus pneumoniae (strain JJA).